We begin with the raw amino-acid sequence, 595 residues long: ATPase family AAA domain-containing protein 3 (595 aa).

Positions 1-48 (MSWLFGVQKNATPQIPDDFQAGAAPGGPQQPGQGQRQEGNSKMAYSFD) are disordered. The Mitochondrial intermembrane segment spans residues 1 to 243 (MSWLFGVQKN…LNQFLNDKTK (243 aa)). Low complexity predominate over residues 20–35 (QAGAAPGGPQQPGQGQ). Coiled-coil stretches lie at residues 80 to 107 (VTRQ…HIRV) and 140 to 175 (EELA…EHEL). Residues 244–260 (IAAAVGGLTALAVGWYT) form a helical membrane-spanning segment. Over 261 to 595 (AKRGTGVTAR…GTTLKRETAV (335 aa)) the chain is Mitochondrial matrix. Position 349–356 (349–356 (GPPGTGKT)) interacts with ATP. Positions 592-595 (ETAV) match the PDZ-binding motif.

The protein belongs to the AAA ATPase family.

It is found in the mitochondrion inner membrane. The protein localises to the mitochondrion matrix. It localises to the mitochondrion nucleoid. Essential for mitochondrial network organization, mitochondrial metabolism and cell growth at organism and cellular level. Important during development for the up-regulation of mitochondrial activity during the transition to higher larval stages. Regulates mitochondrial iron homeostasis. May play an important role in mitochondrial protein synthesis. May also participate in mitochondrial DNA replication. May bind to mitochondrial DNA D-loops and contribute to nucleoid stability. Plays a role in regulating the production of reactive oxygen species in response to heat stress. This chain is ATPase family AAA domain-containing protein 3, found in Caenorhabditis elegans.